Consider the following 396-residue polypeptide: Elongation factor Tu (396 aa).

A tr-type G domain is found at 11–205 (KPHVNIGTIG…TVDEYVPTPE (195 aa)). The interval 20-27 (GHVDHGKT) is G1. 20 to 27 (GHVDHGKT) contributes to the GTP binding site. Thr-27 serves as a coordination point for Mg(2+). The interval 61–65 (GITIN) is G2. The segment at 82-85 (DAPG) is G3. GTP-binding positions include 82 to 86 (DAPGH) and 137 to 140 (NKTD). The interval 137-140 (NKTD) is G4. The segment at 175 to 177 (SAL) is G5.

This sequence belongs to the TRAFAC class translation factor GTPase superfamily. Classic translation factor GTPase family. EF-Tu/EF-1A subfamily. As to quaternary structure, monomer.

It is found in the cytoplasm. The enzyme catalyses GTP + H2O = GDP + phosphate + H(+). GTP hydrolase that promotes the GTP-dependent binding of aminoacyl-tRNA to the A-site of ribosomes during protein biosynthesis. This is Elongation factor Tu from Latilactobacillus sakei subsp. sakei (strain 23K) (Lactobacillus sakei subsp. sakei).